The following is a 192-amino-acid chain: Adenylate kinase (192 aa).

Glycine 10–threonine 18 contributes to the ATP binding site.

This sequence belongs to the archaeal adenylate kinase family. As to quaternary structure, monomer.

Its subcellular location is the cytoplasm. The catalysed reaction is AMP + ATP = 2 ADP. This chain is Adenylate kinase, found in Methanococcus maripaludis (strain DSM 14266 / JCM 13030 / NBRC 101832 / S2 / LL).